We begin with the raw amino-acid sequence, 477 residues long: PEP-dependent dihydroxyacetone kinase, phosphoryl donor subunit DhaM (477 aa).

Residues 1–135 form the PTS EIIA type-4 domain; sequence MIGLIIVSHS…QALQAKQQQL (135 aa). The active-site Tele-phosphohistidine intermediate is His-9. The HPr domain maps to 156 to 243; sequence ALTTQWVVKN…QLAQHNFGDN (88 aa). The Pros-phosphohistidine intermediate role is filled by His-170. Residues 269-477 are PTS EI-like, N-terminal part; that stretch reads HAPNTELCIS…IETRSLIVAS (209 aa). The active-site Tele-phosphohistidine intermediate is His-435.

Belongs to the PEP-utilizing enzyme family. As to quaternary structure, homodimer. The dihydroxyacetone kinase complex is composed of a homodimer of DhaM, a homodimer of DhaK and the subunit DhaL.

It catalyses the reaction dihydroxyacetone + phosphoenolpyruvate = dihydroxyacetone phosphate + pyruvate. Its function is as follows. Component of the dihydroxyacetone kinase complex, which is responsible for the phosphoenolpyruvate (PEP)-dependent phosphorylation of dihydroxyacetone. DhaM serves as the phosphoryl donor. Is phosphorylated by phosphoenolpyruvate in an EI- and HPr-dependent reaction, and a phosphorelay system on histidine residues finally leads to phosphoryl transfer to DhaL and dihydroxyacetone. The polypeptide is PEP-dependent dihydroxyacetone kinase, phosphoryl donor subunit DhaM (Providencia stuartii (strain MRSN 2154)).